A 90-amino-acid polypeptide reads, in one-letter code: UPF0237 protein PAE3582 (90 aa).

One can recognise an ACT domain in the interval 5 to 74 (VVSVLGADRV…LEEEGKRLGV (70 aa)).

This sequence belongs to the UPF0237 family.

The sequence is that of UPF0237 protein PAE3582 from Pyrobaculum aerophilum (strain ATCC 51768 / DSM 7523 / JCM 9630 / CIP 104966 / NBRC 100827 / IM2).